Reading from the N-terminus, the 1016-residue chain is MVLPTCPMAEFALPRHSAVMERLRRRIELCRRHHSTCEARYEAVSPERLELERQHTFALHQRCIQAKAKRAGKHRQPPAATAPAPAAPAPRLDAADGPEHGRPATHLHDTVKRNLDSATSPQNGDQQNGYGDLFPGHKKTRREAPLGVAISSNGLPPASPLGQSDKPSGADALQSSGKHSLGLDSLNKKRLADSSLHLNGGSNPSESFPLSLNKELKQEPVEDLPCMITGTVGSISQSNLMPDLNLNEQEWKELIEELNRSVPDEDMKDLFNEDFEEKKDPESSGSATQTPLAQDINIKTEFSPAAFEQEQLGSPQVRAGSAGQTFLGPSSAPVSTDSPSLGGSQTLFHTSGQPRADNPSPNLMPASAQAQNAQRALAGVVLPSQGPGGASELSSAHQLQQIAAKQKREQMLQNPQQATPAPAPGQMSTWQQTGPSHSSLDVPYPMEKPASPSSYKQDFTNSKLLMMPSVNKSSPRPGGPYLQPSHVNLLSHQPPSNLNQNSANNQGSVLDYGNTKPLSHYKADCGQGSPGSGQSKPALMAYLPQQLSHISHEQNSLFLMKPKPGNMPFRSLVPPGQEQNPSSVPVQAQATSVGTQPPAVSVASSHNSSPYLSSQQQAAVMKQHQLLLDQQKQREQQQKHLQQQQFLQRQQHLLAEQEKQQFQRHLTRPPPQYQDPTQGSFPQQVGQFTGSSAAVPGMNTLGPSNSSCPRVFPQAGNLMPMGPGHASVSSLPTNSGQQDRGVAQFPGSQNMPQSSLYGMASGITQIVAQPPPQATNGHAHIPRQTNVGQNTSVSAAYGQNSLGSSGLSQQHNKGTLNPGLTKPPVPRVSPAMGGQNSSWQHQGMPNLSGQTPGNSNVSPFTAASSFHMQQQAHLKMSSPQFSQAVPNRPMAPMSSAAAVGSLLPPVSAQQRTSAPAPAPPPTAPQQGLPGLSPAGPELGAFSQSPASQMGGRAGLHCTQAYPVRTAGQELPFAYSGQPGGSGLSSVAGHTDLIDSLLKNRTSEEWMSDLDDLLGSQ.

A required for interaction with NOTCH proteins region spans residues 1–123; that stretch reads MVLPTCPMAE…NLDSATSPQN (123 aa). Residue serine 45 is modified to Phosphoserine. Disordered regions lie at residues 65 to 184, 263 to 487, 561 to 617, 658 to 681, and 796 to 953; these read QAKA…LGLD, PDED…PSHV, KPKP…SQQQ, EKQQ…QGSF, and AYGQ…GGRA. The span at 67–76 shows a compositional bias: basic residues; sequence KAKRAGKHRQ. Basic and acidic residues predominate over residues 93 to 115; it reads DAADGPEHGRPATHLHDTVKRNL. The span at 116-129 shows a compositional bias: polar residues; that stretch reads DSATSPQNGDQQNG. Serine 120 is subject to Phosphoserine. The segment covering 263–282 has biased composition (basic and acidic residues); it reads PDEDMKDLFNEDFEEKKDPE. Polar residues predominate over residues 283 to 292; it reads SSGSATQTPL. Phosphoserine occurs at positions 303 and 314. Residues 322–353 show a composition bias toward polar residues; it reads AGQTFLGPSSAPVSTDSPSLGGSQTLFHTSGQ. Position 360 is a phosphoserine (serine 360). The span at 392-403 shows a compositional bias: polar residues; the sequence is ELSSAHQLQQIA. The span at 413 to 426 shows a compositional bias: low complexity; sequence QNPQQATPAPAPGQ. Composition is skewed to polar residues over residues 427 to 439, 451 to 463, 577 to 595, and 602 to 617; these read MSTW…SHSS, SPSS…TNSK, QEQN…SVGT, and VASS…SQQQ. The span at 801-810 shows a compositional bias: low complexity; that stretch reads SLGSSGLSQQ. Lysine 822 is subject to N6-acetyllysine. A compositionally biased stretch (polar residues) spans 834-885; the sequence is GQNSSWQHQGMPNLSGQTPGNSNVSPFTAASSFHMQQQAHLKMSSPQFSQAV. Serine 1015 bears the Phosphoserine mark.

Belongs to the mastermind family. As to quaternary structure, interacts (via N-terminus) with NOTCH1, NOTCH2, NOTCH3 and NOTCH4 (via ankyrin repeat region). Interacts (via N-terminus) with p53 (via DNA-binding region). Forms a DNA-binding complex with Notch proteins and RBPSUH/RBP-J kappa/CBF1. Also binds CREBBP/CBP and CDK8. Forms a complex with PRAG1, NOTCH1 and MAML1, in a MAML1-dependent manner. Widely expressed with highest levels in heart, pancreas, peripheral blood leukocytes and spleen.

The protein resides in the nucleus speckle. In terms of biological role, acts as a transcriptional coactivator for NOTCH proteins. Has been shown to amplify NOTCH-induced transcription of HES1. Enhances phosphorylation and proteolytic turnover of the NOTCH intracellular domain in the nucleus through interaction with CDK8. Binds to CREBBP/CBP which promotes nucleosome acetylation at NOTCH enhancers and activates transcription. Induces phosphorylation and localization of CREBBP to nuclear foci. Plays a role in hematopoietic development by regulating NOTCH-mediated lymphoid cell fate decisions. The polypeptide is Mastermind-like protein 1 (Homo sapiens (Human)).